The chain runs to 152 residues: Large ribosomal subunit protein bL9 (152 aa).

It belongs to the bacterial ribosomal protein bL9 family.

Functionally, binds to the 23S rRNA. The chain is Large ribosomal subunit protein bL9 from Mycobacterium avium (strain 104).